The sequence spans 465 residues: Branched-chain amino acid permease BcaP (465 aa).

Transmembrane regions (helical) follow at residues 28–48 (FLALGVGTIISTSIFTLPGQV), 56–76 (GVVFSYLLAALVAGFVALAYA), 88–110 (AYSWISVLFGEGFGWIAGWALLA), 149–169 (DGGIVDIISLLVILLSAIIVF), 181–201 (ILVVLKVAAVIAFIIVGITVI), 219–239 (FGGFSGIWSGVSMIFLAYIGF), 259–279 (GIIGSLLIAVVLFAAVTLVLV), 309–329 (VVTAIALAGMFIALLGMVLAG), 359–379 (VWTLAIVAIVIGAFFPFAFLA), 380–400 (QLISAGTLIAFMFVTLGIYSL), 416–436 (PFYPVLPALGFIGSLFVFWGL), and 438–458 (VQAKLYSGIWFLIGIAIYFAY).

The protein belongs to the amino acid-polyamine-organocation (APC) superfamily.

It is found in the cell membrane. Branched-chain amino acid transport system that specifically transports branched-chain amino acids (BCAAs) (isoleucine, leucine and valine) and, to a lesser extent, methionine. Important for CodY-mediated regulation, and required for optimal growth in media containing free amino acids as the only amino acid source. This is Branched-chain amino acid permease BcaP from Lactococcus lactis subsp. cremoris (strain MG1363).